The following is a 177-amino-acid chain: CDP-archaeol synthase (177 aa).

Helical transmembrane passes span 6–26, 54–74, 90–110, 124–144, and 148–168; these read LFAS…ACIF, CIFG…LVDF, VILA…GSFI, LLDQ…VAPI, and MIII…IIAY.

It belongs to the CDP-archaeol synthase family. The cofactor is Mg(2+).

The protein resides in the cell membrane. The enzyme catalyses 2,3-bis-O-(geranylgeranyl)-sn-glycerol 1-phosphate + CTP + H(+) = CDP-2,3-bis-O-(geranylgeranyl)-sn-glycerol + diphosphate. Its pathway is membrane lipid metabolism; glycerophospholipid metabolism. Its function is as follows. Catalyzes the formation of CDP-2,3-bis-(O-geranylgeranyl)-sn-glycerol (CDP-archaeol) from 2,3-bis-(O-geranylgeranyl)-sn-glycerol 1-phosphate (DGGGP) and CTP. This reaction is the third ether-bond-formation step in the biosynthesis of archaeal membrane lipids. The sequence is that of CDP-archaeol synthase from Methanocaldococcus jannaschii (strain ATCC 43067 / DSM 2661 / JAL-1 / JCM 10045 / NBRC 100440) (Methanococcus jannaschii).